Here is a 198-residue protein sequence, read N- to C-terminus: Protein LKAAEAR1 (198 aa).

Positions 1-47 are disordered; sequence MPTLGVKGARERDKNSASGAGAGAGAGAGAGEKHRKGPRTTDPPKTG. Positions 20–30 are enriched in gly residues; it reads AGAGAGAGAGA.

The protein is Protein LKAAEAR1 (Lkaaear1) of Mus musculus (Mouse).